We begin with the raw amino-acid sequence, 396 residues long: Serine/threonine-protein kinase 32A (396 aa).

Residue Gly-2 is the site of N-myristoyl glycine attachment. One can recognise a Protein kinase domain in the interval 23-281; it reads FEILRAIGKG…LSDVQNFPYM (259 aa). Residues 29 to 37 and Lys-52 each bind ATP; that span reads IGKGSFGKV. Asp-146 (proton acceptor) is an active-site residue. The disordered stretch occupies residues 373–396; sequence KRQPNLALEQTKDPQGEDGQNNNL.

It belongs to the protein kinase superfamily. Ser/Thr protein kinase family. Mg(2+) is required as a cofactor.

It localises to the cell membrane. It catalyses the reaction L-seryl-[protein] + ATP = O-phospho-L-seryl-[protein] + ADP + H(+). The catalysed reaction is L-threonyl-[protein] + ATP = O-phospho-L-threonyl-[protein] + ADP + H(+). The polypeptide is Serine/threonine-protein kinase 32A (STK32A) (Homo sapiens (Human)).